The primary structure comprises 312 residues: MNWMEVSIVINHEVQEFVTSILEENESNGVVIEDSKDLDGELADKFGEIYELDPNDYPDTGVRVKAYFNEIDYSEELKNQLLRNIQELAELDKNIFDYNEQIIKESDWENEWKNYFHPFKASKNFTIVPSWETYQKESDSELCIELDPGMAFGTGDHPTTSMCLNAIEQYVKPSDSVIDVGTGSGILSIACHLLGVRHIKAVDLDELAVRVAKENFEKNSCENAIETTTGNLLKGETNKYDVVIANILAHIIEEMIEDAYNTLNEEGRFITSGIIIEKSDEIIEHMKRVGFNIISINHDNGWACIVGEKVSN.

The S-adenosyl-L-methionine site is built by Thr160, Gly181, Asp203, and Asn246.

Belongs to the methyltransferase superfamily. PrmA family.

It localises to the cytoplasm. The enzyme catalyses L-lysyl-[protein] + 3 S-adenosyl-L-methionine = N(6),N(6),N(6)-trimethyl-L-lysyl-[protein] + 3 S-adenosyl-L-homocysteine + 3 H(+). Methylates ribosomal protein L11. This is Ribosomal protein L11 methyltransferase from Staphylococcus carnosus (strain TM300).